Consider the following 501-residue polypeptide: Bifunctional purine biosynthesis protein PurH (501 aa).

An MGS-like domain is found at 1–144 (MKKRALISVF…KNFKDVVVLS (144 aa)).

The protein belongs to the PurH family.

The catalysed reaction is (6R)-10-formyltetrahydrofolate + 5-amino-1-(5-phospho-beta-D-ribosyl)imidazole-4-carboxamide = 5-formamido-1-(5-phospho-D-ribosyl)imidazole-4-carboxamide + (6S)-5,6,7,8-tetrahydrofolate. It catalyses the reaction IMP + H2O = 5-formamido-1-(5-phospho-D-ribosyl)imidazole-4-carboxamide. The protein operates within purine metabolism; IMP biosynthesis via de novo pathway; 5-formamido-1-(5-phospho-D-ribosyl)imidazole-4-carboxamide from 5-amino-1-(5-phospho-D-ribosyl)imidazole-4-carboxamide (10-formyl THF route): step 1/1. It participates in purine metabolism; IMP biosynthesis via de novo pathway; IMP from 5-formamido-1-(5-phospho-D-ribosyl)imidazole-4-carboxamide: step 1/1. The sequence is that of Bifunctional purine biosynthesis protein PurH from Clostridium perfringens (strain ATCC 13124 / DSM 756 / JCM 1290 / NCIMB 6125 / NCTC 8237 / Type A).